An 86-amino-acid chain; its full sequence is Kunitz-type conkunitzin-S1 (86 aa).

An N-terminal signal peptide occupies residues 1–26; it reads MEGRRFAAVLILTICMLAPGTGTLLP. The 51-residue stretch at 33-83 folds into the BPTI/Kunitz inhibitor domain; that stretch reads CDLPADSGSGTKAEKRIYYNSARKQCLRFDYTGQGGNENNFRRTYDCQRTC. 2 disulfide bridges follow: cysteine 33–cysteine 83 and cysteine 58–cysteine 79. Threonine 86 is subject to Threonine amide.

It belongs to the venom Kunitz-type family. Post-translationally, contains 2 disulfide bonds instead of 3, as for all Kunitz domain proteins. A double Cys-mutant carrying an additional Cys bridge does not show difference in activity with the natural peptide. However, there are some differences in the kinetics of binding of both peptides to the channel. As to expression, expressed by the venom duct.

It localises to the secreted. Functionally, blocks specifically voltage-activated potassium channels (Kv) of the Shaker family (IC(50)=1.33 nM). The sequence is that of Kunitz-type conkunitzin-S1 from Conus striatus (Striated cone).